Reading from the N-terminus, the 74-residue chain is U3-agatoxin-Ao1g (74 aa).

An N-terminal signal peptide occupies residues 1–20; that stretch reads MRAIISLLLISTMVFGVIEA. A propeptide spanning residues 21-34 is cleaved from the precursor; that stretch reads VSVEEGLKIFEGER. 4 cysteine pairs are disulfide-bonded: Cys-37/Cys-53, Cys-44/Cys-58, Cys-52/Cys-68, and Cys-60/Cys-66. Asn-72 bears the Asparagine amide mark.

It belongs to the neurotoxin 07 (Beta/delta-agtx) family. 03 (aga-4) subfamily. Aga sub-subfamily. As to expression, expressed by the venom gland.

It is found in the secreted. Its function is as follows. Insecticidal neurotoxin that modulates the insect Nav channel (DmNaV1/tipE (para/tipE)) in a unique manner, with both the activation and inactivation processes being affected. The voltage dependence of activation is shifted toward more hyperpolarized potentials (analogous to site 4 toxins) and a non-inactivating persistent sodium current is induced (site 3-like action). Interestingly, both effects take place in a voltage-dependent manner, producing a bell-shaped curve between -80 and 0 mV. This chain is U3-agatoxin-Ao1g, found in Agelena orientalis (Funnel-web spider).